The sequence spans 485 residues: Glycogen synthase (485 aa).

ADP-alpha-D-glucose is bound at residue Lys20.

This sequence belongs to the glycosyltransferase 1 family. Bacterial/plant glycogen synthase subfamily.

The enzyme catalyses [(1-&gt;4)-alpha-D-glucosyl](n) + ADP-alpha-D-glucose = [(1-&gt;4)-alpha-D-glucosyl](n+1) + ADP + H(+). The protein operates within glycan biosynthesis; glycogen biosynthesis. Synthesizes alpha-1,4-glucan chains using ADP-glucose. This is Glycogen synthase from Vibrio parahaemolyticus serotype O3:K6 (strain RIMD 2210633).